The primary structure comprises 218 residues: Lactosylceramide 4-alpha-galactosyltransferase (218 aa).

The DXD motif signature appears at 57–59 (DTD).

It belongs to the glycosyltransferase 32 family.

It is found in the golgi apparatus membrane. The enzyme catalyses a beta-D-Gal-(1-&gt;4)-beta-D-Glc-(1&lt;-&gt;1)-Cer(d18:1(4E)) + UDP-alpha-D-galactose = a globoside Gb3Cer (d18:1(4E)) + UDP + H(+). The catalysed reaction is a beta-D-Gal-(1&lt;-&gt;1')-ceramide + UDP-alpha-D-galactose = alpha-D-Gal-(1-&gt;4)-beta-D-Gal-(1&lt;-&gt;1')-Cer + UDP + H(+). It functions in the pathway glycolipid biosynthesis. Catalyzes the transfer of galactose from UDP-alpha-D-galactose to lactosylceramide/beta-D-galactosyl-(1-&gt;4)-beta-D-glucosyl-(1&lt;-&gt;1)-ceramide(d18:1(4E)) to produce globotriaosylceramide/globoside Gb3Cer (d18:1(4E)). Also able to transfer galactose to galactosylceramide/beta-D-Gal-(1&lt;-&gt;1')-Cer. Globoside Gb3Cer is a glycosphingolipid of the globo serie, one of the major types of neutral root structures of glycosphingolipids, that constitute a significant portion of mammalian cell membranes. The polypeptide is Lactosylceramide 4-alpha-galactosyltransferase (A4GALT) (Pongo pygmaeus (Bornean orangutan)).